We begin with the raw amino-acid sequence, 227 residues long: Pyridoxine-5'-phosphate oxidase (227 aa).

A pyridoxal 5'-phosphate-binding site is contributed by 20 to 23 (RKDY). 75-78 (RVVL) lines the FMN pocket. Lysine 80 is a binding site for pyridoxal 5'-phosphate. FMN is bound by residues 90–91 (YT), 96–97 (RK), and glutamine 117. Residues tyrosine 135, arginine 139, and serine 143 each contribute to the pyridoxal 5'-phosphate site. FMN contacts are provided by residues 152-153 (FQ) and tryptophan 197. 203–205 (RIH) contacts pyridoxal 5'-phosphate. Arginine 207 serves as a coordination point for FMN.

Belongs to the pyridoxamine 5'-phosphate oxidase family. Homodimer. FMN serves as cofactor.

It catalyses the reaction pyridoxamine 5'-phosphate + O2 + H2O = pyridoxal 5'-phosphate + H2O2 + NH4(+). The catalysed reaction is pyridoxine 5'-phosphate + O2 = pyridoxal 5'-phosphate + H2O2. Its pathway is cofactor metabolism; pyridoxal 5'-phosphate salvage; pyridoxal 5'-phosphate from pyridoxamine 5'-phosphate: step 1/1. It participates in cofactor metabolism; pyridoxal 5'-phosphate salvage; pyridoxal 5'-phosphate from pyridoxine 5'-phosphate: step 1/1. Functionally, catalyzes the oxidation of either pyridoxine 5'-phosphate (PNP) or pyridoxamine 5'-phosphate (PMP) into pyridoxal 5'-phosphate (PLP). The protein is Pyridoxine-5'-phosphate oxidase (pnpo) of Dictyostelium discoideum (Social amoeba).